An 843-amino-acid polypeptide reads, in one-letter code: Protein P (843 aa).

Residues Met1–Gln177 are terminal protein domain (TP). A spacer region spans residues Asp178–Ile346. Disordered regions lie at residues Arg219 to Glu258 and Ser297 to Ser316. The tract at residues Asp347–Gln690 is polymerase/reverse transcriptase domain (RT). The 244-residue stretch at Glu357–Ile600 folds into the Reverse transcriptase domain. Residues Asp429, Asp551, and Asp552 each coordinate Mg(2+).

This sequence belongs to the hepadnaviridae P protein family.

The enzyme catalyses DNA(n) + a 2'-deoxyribonucleoside 5'-triphosphate = DNA(n+1) + diphosphate. It carries out the reaction Endonucleolytic cleavage to 5'-phosphomonoester.. With respect to regulation, activated by host HSP70 and HSP40 in vitro to be able to bind the epsilon loop of the pgRNA. Because deletion of the RNase H region renders the protein partly chaperone-independent, the chaperones may be needed indirectly to relieve occlusion of the RNA-binding site by this domain. Inhibited by several reverse-transcriptase inhibitors: Lamivudine, Adefovir and Entecavir. Functionally, multifunctional enzyme that converts the viral RNA genome into dsDNA in viral cytoplasmic capsids. This enzyme displays a DNA polymerase activity that can copy either DNA or RNA templates, and a ribonuclease H (RNase H) activity that cleaves the RNA strand of RNA-DNA heteroduplexes in a partially processive 3'- to 5'-endonucleasic mode. Neo-synthesized pregenomic RNA (pgRNA) are encapsidated together with the P protein, and reverse-transcribed inside the nucleocapsid. Initiation of reverse-transcription occurs first by binding the epsilon loop on the pgRNA genome, and is initiated by protein priming, thereby the 5'-end of (-)DNA is covalently linked to P protein. Partial (+)DNA is synthesized from the (-)DNA template and generates the relaxed circular DNA (RC-DNA) genome. After budding and infection, the RC-DNA migrates in the nucleus, and is converted into a plasmid-like covalently closed circular DNA (cccDNA). The activity of P protein does not seem to be necessary for cccDNA generation, and is presumably released from (+)DNA by host nuclear DNA repair machinery. The chain is Protein P from Hepatitis B virus genotype B1 (isolate Japan/Ry30/2002) (HBV-B).